The chain runs to 150 residues: Ribonuclease pancreatic (150 aa).

The signal sequence occupies residues 1-26 (MALKSLVLLSLLVLVLLLVRVQPSLG). 2 N-linked (Glc) (glycation) lysine; in vitro glycosylation sites follow: Lys27 and Lys33. Substrate-binding residues include Lys33 and Arg36. Residue His38 is the Proton acceptor of the active site. Cystine bridges form between Cys52–Cys110, Cys66–Cys121, Cys84–Cys136, and Cys91–Cys98. Asn60 carries an N-linked (GlcNAc...) asparagine; partial glycan. Lys63 and Lys67 each carry an N-linked (Glc) (glycation) lysine; in vitro glycan. Substrate-binding positions include 67–71 (KPVNT), Lys92, and Arg111. His145 serves as the catalytic Proton donor.

It belongs to the pancreatic ribonuclease family. As to quaternary structure, interacts with and forms tight 1:1 complexes with RNH1. Dimerization of two such complexes may occur. Interaction with RNH1 inhibits this protein. Monomer. As to expression, pancreas.

It is found in the secreted. It carries out the reaction an [RNA] containing cytidine + H2O = an [RNA]-3'-cytidine-3'-phosphate + a 5'-hydroxy-ribonucleotide-3'-[RNA].. It catalyses the reaction an [RNA] containing uridine + H2O = an [RNA]-3'-uridine-3'-phosphate + a 5'-hydroxy-ribonucleotide-3'-[RNA].. Its function is as follows. Endonuclease that catalyzes the cleavage of RNA on the 3' side of pyrimidine nucleotides. Acts on single-stranded and double-stranded RNA. The polypeptide is Ribonuclease pancreatic (RNASE1) (Bos taurus (Bovine)).